The primary structure comprises 152 residues: UPF0266 membrane protein YobD (152 aa).

The next 3 membrane-spanning stretches (helical) occupy residues 6–26, 45–65, and 67–87; these read LVLILFIAALLAFAIYDQFIM, IDSVIFVGLIVILIYNNVTNH, and ALITTWLLSALALMGFYIFWI.

It belongs to the UPF0266 family.

Its subcellular location is the cell inner membrane. This Shigella dysenteriae serotype 1 (strain Sd197) protein is UPF0266 membrane protein YobD.